The chain runs to 115 residues: Ribonuclease P protein component (115 aa).

It belongs to the RnpA family. Consists of a catalytic RNA component (M1 or rnpB) and a protein subunit.

The enzyme catalyses Endonucleolytic cleavage of RNA, removing 5'-extranucleotides from tRNA precursor.. Functionally, RNaseP catalyzes the removal of the 5'-leader sequence from pre-tRNA to produce the mature 5'-terminus. It can also cleave other RNA substrates such as 4.5S RNA. The protein component plays an auxiliary but essential role in vivo by binding to the 5'-leader sequence and broadening the substrate specificity of the ribozyme. The chain is Ribonuclease P protein component from Symbiobacterium thermophilum (strain DSM 24528 / JCM 14929 / IAM 14863 / T).